The following is a 138-amino-acid chain: Flagellar assembly factor FliW (138 aa).

This sequence belongs to the FliW family. Interacts with translational regulator CsrA and flagellin(s).

It localises to the cytoplasm. In terms of biological role, acts as an anti-CsrA protein, binds CsrA and prevents it from repressing translation of its target genes, one of which is flagellin. Binds to flagellin and participates in the assembly of the flagellum. This Symbiobacterium thermophilum (strain DSM 24528 / JCM 14929 / IAM 14863 / T) protein is Flagellar assembly factor FliW.